The primary structure comprises 680 residues: MDQFIDVVSFEIEAGHGGAGSVSFRREAHVPMGGPDGGNGGDGGDVIVRVDARINSFGKIKSRKRFRARDGEPGRARLSDGKRGDDVVIRVPIGTVVYDEDTNNILADLLEDGQSYTVARGGKGGKGNKFYATATNQAPDYAQHGLDGEKLNIRLEVKLIADIGLVGMPNTGKSSLLARLTRANPKIASYPFTTLTPNLGVCYLDYERSFVIADIPGIIEGASEGAGLGLTFLRHIERTGALCFVIDLTDEDVADTYKKLRNELKQYSKELIKKKSIIVLNKTDMLEKDEIKAKVKAIEKAVKKEYKNNKETHYEEPEIFALSVFSLDGDMLDKVTNAFYKANEERYDNTKKETKEPLLLNQNKTKSKLKTKRVFGPVVSKRLGNSLGIDVIPHKTCSYNCIYCQLGSEENTKTSLANYYSVDEIIYELKEALLNNKNIDYITFAGSGEPTLYKDLKKLIYEIKQITDIPVCIITNGSLLYKQEMRSDLLIADLVIPSLDAGNMDTFKLIDQPNKEIDFDKMVNGLIEFRRVFKGEYWLEVFLLKDINDSKEELDDIIKIVNKIKPDRVQLVTATRRTSNEKAKALNDEEMEKAKKYFEANCSIEIDVPSVSDKAKGNTKKITEEDIINFLIRQPDTVHMIAISFNEDESRVSELLKKLVESGKVREEIVNGVLSYAVNI.

The 159-residue stretch at 2–160 (DQFIDVVSFE…LNIRLEVKLI (159 aa)) folds into the Obg domain. Residues 161–336 (ADIGLVGMPN…LDGDMLDKVT (176 aa)) form the OBG-type G domain. Residues 167–174 (GMPNTGKS), 192–196 (FTTLT), 214–217 (DIPG), 281–284 (NKTD), and 317–319 (PEI) each bind GTP. 2 residues coordinate Mg(2+): serine 174 and threonine 194. Positions 371 to 680 (TKRVFGPVVS…NGVLSYAVNI (310 aa)) are radical SAM domain. A Radical SAM core domain is found at 383-613 (LGNSLGIDVI…IEIDVPSVSD (231 aa)). Cysteine 397, cysteine 401, and cysteine 404 together coordinate [4Fe-4S] cluster.

This sequence belongs to the TRAFAC class OBG-HflX-like GTPase superfamily. OBG GTPase family. In terms of assembly, monomer. Mg(2+) serves as cofactor. [4Fe-4S] cluster is required as a cofactor.

Its subcellular location is the cytoplasm. Its function is as follows. An essential GTPase which binds GTP, GDP and possibly (p)ppGpp with moderate affinity, with high nucleotide exchange rates and a fairly low GTP hydrolysis rate. Plays a role in control of the cell cycle, stress response, ribosome biogenesis and in those bacteria that undergo differentiation, in morphogenesis control. The chain is GTPase Obg from Brachyspira hyodysenteriae (strain ATCC 49526 / WA1).